The chain runs to 351 residues: Pentatricopeptide repeat-containing protein At3g56030, mitochondrial (351 aa).

A mitochondrion-targeting transit peptide spans 1-41 (MFRLKPLISVDLNQTMSLLRRFVKEANNSRFLLQSISGRSF). PPR repeat units follow at residues 124 to 158 (RKHS…EFGL), 159 to 193 (STCV…AIPV), 194 to 224 (DVTS…MEEE), and 232 to 266 (DTRT…GLSV).

The protein belongs to the PPR family. P subfamily.

The protein resides in the mitochondrion. This chain is Pentatricopeptide repeat-containing protein At3g56030, mitochondrial, found in Arabidopsis thaliana (Mouse-ear cress).